Consider the following 219-residue polypeptide: MASGTVGGLSEVYSSAKRILLRARNGIEKLERFDSDPTDLASSVKRDITEVQSLCSNMDGLWRSIPVKSQRDLWRRKSEQVGEEAEYLNQSLEKYMWRNQRKMLEAKERADLLGRGSGEGAHILQIFDEEAQGMNSVKNSKRMLEDSFQSGVAILSKYAEQRDRLKSAQRKALDVLNTVGLSNSVLRLIERRNRVDTWIKYAGMIATLVILYLFIRWTR.

Ala-2 bears the N-acetylalanine mark. Topologically, residues 2-197 (ASGTVGGLSE…LIERRNRVDT (196 aa)) are cytoplasmic. Residues 198-215 (WIKYAGMIATLVILYLFI) form a helical; Anchor for type IV membrane protein membrane-spanning segment. At 216-219 (RWTR) the chain is on the vesicular side.

This sequence belongs to the GOSR2 family.

The protein resides in the golgi apparatus membrane. Involved in transport of proteins from the cis/medial-Golgi to the trans-Golgi network. The chain is Membrin-12 (MEMB12) from Arabidopsis thaliana (Mouse-ear cress).